Reading from the N-terminus, the 240-residue chain is Carboxy-S-adenosyl-L-methionine synthase (240 aa).

S-adenosyl-L-methionine contacts are provided by residues Y35, 61 to 63, 86 to 87, 112 to 113, and R194; these read GCS, DN, and DI.

It belongs to the class I-like SAM-binding methyltransferase superfamily. Cx-SAM synthase family. In terms of assembly, homodimer.

The enzyme catalyses prephenate + S-adenosyl-L-methionine = carboxy-S-adenosyl-L-methionine + 3-phenylpyruvate + H2O. Catalyzes the conversion of S-adenosyl-L-methionine (SAM) to carboxy-S-adenosyl-L-methionine (Cx-SAM). In Wolinella succinogenes (strain ATCC 29543 / DSM 1740 / CCUG 13145 / JCM 31913 / LMG 7466 / NCTC 11488 / FDC 602W) (Vibrio succinogenes), this protein is Carboxy-S-adenosyl-L-methionine synthase.